The sequence spans 279 residues: Large ribosomal subunit protein uL2 (279 aa).

Positions 223–279 (TVRGSAMNPNDHPHGGGEGRSPVGMDAPRTPWGKRHMGVKTRNNKKSSTSMIVRRRK) are disordered. A compositionally biased stretch (basic residues) spans 254–267 (WGKRHMGVKTRNNK).

Belongs to the universal ribosomal protein uL2 family. Part of the 50S ribosomal subunit. Forms a bridge to the 30S subunit in the 70S ribosome.

Functionally, one of the primary rRNA binding proteins. Required for association of the 30S and 50S subunits to form the 70S ribosome, for tRNA binding and peptide bond formation. It has been suggested to have peptidyltransferase activity; this is somewhat controversial. Makes several contacts with the 16S rRNA in the 70S ribosome. The polypeptide is Large ribosomal subunit protein uL2 (Ureaplasma parvum serovar 3 (strain ATCC 27815 / 27 / NCTC 11736)).